Here is a 549-residue protein sequence, read N- to C-terminus: Hydroxylamine reductase (549 aa).

[4Fe-4S] cluster is bound by residues Cys5, Cys8, Cys17, and Cys23. The hybrid [4Fe-2O-2S] cluster site is built by His243, Glu267, Cys311, Cys403, Cys431, Cys456, Glu491, and Lys493. Cys403 is modified (cysteine persulfide).

This sequence belongs to the HCP family. It depends on [4Fe-4S] cluster as a cofactor. Hybrid [4Fe-2O-2S] cluster serves as cofactor.

Its subcellular location is the cytoplasm. The catalysed reaction is A + NH4(+) + H2O = hydroxylamine + AH2 + H(+). Catalyzes the reduction of hydroxylamine to form NH(3) and H(2)O. This chain is Hydroxylamine reductase, found in Desulfitobacterium hafniense (strain DSM 10664 / DCB-2).